The primary structure comprises 98 residues: Co-chaperonin GroES (98 aa).

The protein belongs to the GroES chaperonin family. As to quaternary structure, heptamer of 7 subunits arranged in a ring. Interacts with the chaperonin GroEL.

The protein resides in the cytoplasm. Together with the chaperonin GroEL, plays an essential role in assisting protein folding. The GroEL-GroES system forms a nano-cage that allows encapsulation of the non-native substrate proteins and provides a physical environment optimized to promote and accelerate protein folding. GroES binds to the apical surface of the GroEL ring, thereby capping the opening of the GroEL channel. This chain is Co-chaperonin GroES, found in Renibacterium salmoninarum (strain ATCC 33209 / DSM 20767 / JCM 11484 / NBRC 15589 / NCIMB 2235).